The sequence spans 387 residues: Phosphoglycerate kinase (387 aa).

Substrate is bound by residues D21 to N23, R36, H59 to R62, R113, and R146. ATP contacts are provided by residues K197, E314, and G340 to T343.

Belongs to the phosphoglycerate kinase family. In terms of assembly, monomer.

It localises to the cytoplasm. The enzyme catalyses (2R)-3-phosphoglycerate + ATP = (2R)-3-phospho-glyceroyl phosphate + ADP. Its pathway is carbohydrate degradation; glycolysis; pyruvate from D-glyceraldehyde 3-phosphate: step 2/5. The protein is Phosphoglycerate kinase of Pseudomonas putida (strain GB-1).